We begin with the raw amino-acid sequence, 195 residues long: dTTP/UTP pyrophosphatase (195 aa).

Catalysis depends on Asp-73, which acts as the Proton acceptor.

It belongs to the Maf family. YhdE subfamily. It depends on a divalent metal cation as a cofactor.

The protein localises to the cytoplasm. The catalysed reaction is dTTP + H2O = dTMP + diphosphate + H(+). It catalyses the reaction UTP + H2O = UMP + diphosphate + H(+). Its function is as follows. Nucleoside triphosphate pyrophosphatase that hydrolyzes dTTP and UTP. May have a dual role in cell division arrest and in preventing the incorporation of modified nucleotides into cellular nucleic acids. The chain is dTTP/UTP pyrophosphatase from Exiguobacterium sibiricum (strain DSM 17290 / CCUG 55495 / CIP 109462 / JCM 13490 / 255-15).